Reading from the N-terminus, the 325-residue chain is Alpha-cuprenene synthase COP6 (325 aa).

5 residues coordinate Mg(2+): Asp102, Glu166, Asn224, Ser228, and Glu232.

The protein belongs to the trichodiene synthase family. Mg(2+) is required as a cofactor.

In terms of biological role, alpha-cuprenene synthase; part of the gene cluster that mediates the biosynthesis of alpha-cuprenene and oxidized derivatives. The alpha-cuprenene synthase COP6 is the only sesquiterpene synthase identified in C.cinereus that appears to be part of a biosynthetic gene cluster and is highly specific since it catalyzes the cyclization of (2E,6E)-farnesyl diphosphate into only one product, alpha-cuprenene. COP6 is also able to perform the cyclization of geranyl diphosphate. The cytochrome P450 monooxygenase COX2 then oxidizes the cyclohexadiene ring of alpha-cuprenene at positions 1 and 4, yielding first alpha-cuparene, followed by alpha-cuparophenol and a further yet unidentified compound resulting from one additional oxidation step. The cytochrome P450 monooxygenase COX1 then likely catalyzes the oxidation at position 9 of the pentane ring of alpha-cuprenene to give the corresponding hydroxy or ketone derivatives. This Coprinopsis cinerea (strain Okayama-7 / 130 / ATCC MYA-4618 / FGSC 9003) (Inky cap fungus) protein is Alpha-cuprenene synthase COP6.